Here is a 428-residue protein sequence, read N- to C-terminus: MKTSIFKSLYVQVLTAIAIGILLGHFYPELGAQMKPFGDAFVKLIKMVIAPVIFCTVVTGIAGMESMKAVGRTGAVALLYFEVVSTIALIIGLIIVNVVQPGAGMNVDPSTLDAKAVAVYAEQAKDQGVVAFLLDVIPGSVIGAFASGNILQVLLFAVLFGFALHRLGSKGQLIFNVIESFSQVIFGIINMIMRLAPIGAFGAMAFTIGKYGVGTLVQLGQLIICFYITCILFVVVVLGSIARATGFSIFKFIRYIREELLIVLGTSSSESALPRMLDKMEKLGCRKSVVGLVIPTGYSFNLDGTSIYLTMAAVFIAQATNSHMDIFHQITLLVVLLLSSKGAAGVTGSGFIVLAATISAVGHLPVAGLALILGIDRFMSEARALTNLVGNGVATVVVAKWVKELDAKQMDDVLNNRVPANKTHELSS.

9 consecutive transmembrane segments (helical) span residues 8-28 (SLYV…HFYP), 44-64 (LIKM…IAGM), 76-96 (VALL…LIIV), 142-162 (IGAF…LFGF), 184-204 (VIFG…FGAM), 222-242 (LIIC…GSIA), 289-309 (VVGL…SIYL), 326-346 (IFHQ…AAGV), and 352-372 (IVLA…LALI).

The protein belongs to the dicarboxylate/amino acid:cation symporter (DAACS) (TC 2.A.23) family.

The protein localises to the cell inner membrane. In terms of biological role, responsible for the transport of dicarboxylates such as succinate, fumarate, and malate from the periplasm across the membrane. This chain is C4-dicarboxylate transport protein, found in Klebsiella pneumoniae subsp. pneumoniae (strain ATCC 700721 / MGH 78578).